Consider the following 99-residue polypeptide: Integration host factor subunit alpha (99 aa).

The tract at residues 51–71 is disordered; sequence NFDLRDKNQRPGRNPKTGEDI.

This sequence belongs to the bacterial histone-like protein family. In terms of assembly, heterodimer of an alpha and a beta chain.

This protein is one of the two subunits of integration host factor, a specific DNA-binding protein that functions in genetic recombination as well as in transcriptional and translational control. The sequence is that of Integration host factor subunit alpha (ihfA) from Dickeya dadantii (strain 3937) (Erwinia chrysanthemi (strain 3937)).